We begin with the raw amino-acid sequence, 346 residues long: SUMO-activating enzyme subunit 1 (346 aa).

The residue at position 1 (methionine 1) is an N-acetylmethionine. Valine 2 is modified (N-acetylvaline; in SUMO-activating enzyme subunit 1, N-terminally processed). Position 12 is a phosphoserine (serine 12). At lysine 198 the chain carries N6-acetyllysine.

The protein belongs to the ubiquitin-activating E1 family. As to quaternary structure, heterodimer of SAE1 and UBA2/SAE2. The heterodimer corresponds to the two domains that are encoded on a single polypeptide chain in ubiquitin-activating enzyme E1. Interacts with UBE2I. Expression level increases during S phase and drops in G2 phase (at protein level).

Its subcellular location is the nucleus. The protein operates within protein modification; protein sumoylation. Functionally, the heterodimer acts as an E1 ligase for SUMO1, SUMO2, SUMO3, and probably SUMO4. It mediates ATP-dependent activation of SUMO proteins followed by formation of a thioester bond between a SUMO protein and a conserved active site cysteine residue on UBA2/SAE2. This Homo sapiens (Human) protein is SUMO-activating enzyme subunit 1 (SAE1).